The sequence spans 199 residues: Large ribosomal subunit protein uL10 (199 aa).

It belongs to the universal ribosomal protein uL10 family. Part of the ribosomal stalk of the 50S ribosomal subunit. The N-terminus interacts with L11 and the large rRNA to form the base of the stalk. The C-terminus forms an elongated spine to which L12 dimers bind in a sequential fashion forming a multimeric L10(L12)X complex.

Functionally, forms part of the ribosomal stalk, playing a central role in the interaction of the ribosome with GTP-bound translation factors. The polypeptide is Large ribosomal subunit protein uL10 (rplJ) (Aquifex aeolicus (strain VF5)).